The sequence spans 203 residues: Outer-membrane lipoprotein carrier protein (203 aa).

An N-terminal signal peptide occupies residues 1–21 (MKKQLMTSCLFAAVLAAPAFA).

It belongs to the LolA family. In terms of assembly, monomer.

The protein localises to the periplasm. Its function is as follows. Participates in the translocation of lipoproteins from the inner membrane to the outer membrane. Only forms a complex with a lipoprotein if the residue after the N-terminal Cys is not an aspartate (The Asp acts as a targeting signal to indicate that the lipoprotein should stay in the inner membrane). The chain is Outer-membrane lipoprotein carrier protein from Sodalis glossinidius (strain morsitans).